Reading from the N-terminus, the 312-residue chain is Adenylyl-sulfate kinase, chloroplastic (312 aa).

142-149 lines the ATP pocket; it reads GLSGSGKS. The active-site Phosphoserine intermediate is Ser-216.

Belongs to the APS kinase family.

The protein localises to the plastid. It is found in the chloroplast. The catalysed reaction is adenosine 5'-phosphosulfate + ATP = 3'-phosphoadenylyl sulfate + ADP + H(+). The protein operates within sulfur metabolism; hydrogen sulfide biosynthesis; sulfite from sulfate: step 2/3. Its function is as follows. Catalyzes the synthesis of activated sulfate. This Catharanthus roseus (Madagascar periwinkle) protein is Adenylyl-sulfate kinase, chloroplastic (AKN).